The chain runs to 292 residues: 4-hydroxy-tetrahydrodipicolinate synthase (292 aa).

Threonine 45 serves as a coordination point for pyruvate. Tyrosine 133 (proton donor/acceptor) is an active-site residue. The Schiff-base intermediate with substrate role is filled by lysine 161. Isoleucine 203 contacts pyruvate.

The protein belongs to the DapA family. As to quaternary structure, homotetramer; dimer of dimers.

It localises to the cytoplasm. The enzyme catalyses L-aspartate 4-semialdehyde + pyruvate = (2S,4S)-4-hydroxy-2,3,4,5-tetrahydrodipicolinate + H2O + H(+). It participates in amino-acid biosynthesis; L-lysine biosynthesis via DAP pathway; (S)-tetrahydrodipicolinate from L-aspartate: step 3/4. Catalyzes the condensation of (S)-aspartate-beta-semialdehyde [(S)-ASA] and pyruvate to 4-hydroxy-tetrahydrodipicolinate (HTPA). The chain is 4-hydroxy-tetrahydrodipicolinate synthase from Shigella boydii serotype 18 (strain CDC 3083-94 / BS512).